A 423-amino-acid polypeptide reads, in one-letter code: Ornithine cyclodeaminase (423 aa).

Asparagine 241, alanine 242, aspartate 320, threonine 352, methionine 353, leucine 354, histidine 355, aspartate 373, aspartate 396, and valine 397 together coordinate NAD(+).

Belongs to the AgrE/ArgZ ornithine cyclodeaminase family. NAD(+) is required as a cofactor.

The catalysed reaction is L-ornithine = L-proline + NH4(+). Catalyzes the conversion of ornithine to proline, with the release of ammonia. The protein is Ornithine cyclodeaminase of Methanocaldococcus jannaschii (strain ATCC 43067 / DSM 2661 / JAL-1 / JCM 10045 / NBRC 100440) (Methanococcus jannaschii).